Consider the following 309-residue polypeptide: NAD kinase (309 aa).

D89 serves as the catalytic Proton acceptor. Residues 89–90 (DG), 163–164 (NE), H174, R191, D193, and 204–209 (TAYALS) contribute to the NAD(+) site.

It belongs to the NAD kinase family. A divalent metal cation is required as a cofactor.

It is found in the cytoplasm. It catalyses the reaction NAD(+) + ATP = ADP + NADP(+) + H(+). Its function is as follows. Involved in the regulation of the intracellular balance of NAD and NADP, and is a key enzyme in the biosynthesis of NADP. Catalyzes specifically the phosphorylation on 2'-hydroxyl of the adenosine moiety of NAD to yield NADP. This chain is NAD kinase, found in Shewanella sp. (strain MR-4).